We begin with the raw amino-acid sequence, 224 residues long: Heme response regulator HssR (224 aa).

A Response regulatory domain is found at 3 to 116; the sequence is QCLVVDDDPR…ELIFRIRAVL (114 aa). Asp52 is subject to 4-aspartylphosphate. The segment at residues 124 to 222 is a DNA-binding region (ompR/PhoB-type); it reads NSEMTIGNLT…VRGQGYKVEN (99 aa).

In terms of processing, phosphorylated by HssS.

It is found in the cytoplasm. Functionally, member of the two-component regulatory system HssS/HssR involved in intracellular heme homeostasis and tempering of staphylococcal virulence. Phosphorylated HssR binds to a direct repeat sequence within hrtAB promoter and activates the expression of hrtAB, an efflux pump, in response to extracellular heme, hemin, hemoglobin or blood. This is Heme response regulator HssR (hssR) from Staphylococcus aureus (strain Mu50 / ATCC 700699).